Consider the following 942-residue polypeptide: UvrABC system protein A (942 aa).

32–39 (GLSGSGKS) contributes to the ATP binding site. Residues 251–278 (CPVCGFTVPELEPRLFSFNAPFGSCPTC) form a C4-type zinc finger. ABC transporter domains lie at 308–589 (WNPI…KKSI) and 609–937 (GNGR…HYLK). ATP is bound at residue 641-648 (GVSGSGKS). Residues 740-766 (CEACSGDGIIKIEMHFLPDVYVPCEVC) form a C4-type zinc finger.

The protein belongs to the ABC transporter superfamily. UvrA family. As to quaternary structure, forms a heterotetramer with UvrB during the search for lesions.

It localises to the cytoplasm. The UvrABC repair system catalyzes the recognition and processing of DNA lesions. UvrA is an ATPase and a DNA-binding protein. A damage recognition complex composed of 2 UvrA and 2 UvrB subunits scans DNA for abnormalities. When the presence of a lesion has been verified by UvrB, the UvrA molecules dissociate. The chain is UvrABC system protein A from Streptococcus pyogenes serotype M6 (strain ATCC BAA-946 / MGAS10394).